A 71-amino-acid polypeptide reads, in one-letter code: Putative membrane protein insertion efficiency factor (71 aa).

This sequence belongs to the UPF0161 family.

The protein resides in the cell membrane. In terms of biological role, could be involved in insertion of integral membrane proteins into the membrane. This chain is Putative membrane protein insertion efficiency factor, found in Ruminiclostridium cellulolyticum (strain ATCC 35319 / DSM 5812 / JCM 6584 / H10) (Clostridium cellulolyticum).